Here is a 130-residue protein sequence, read N- to C-terminus: Small ribosomal subunit protein uS9 (130 aa).

This sequence belongs to the universal ribosomal protein uS9 family.

The chain is Small ribosomal subunit protein uS9 from Burkholderia multivorans (strain ATCC 17616 / 249).